The primary structure comprises 309 residues: Pantothenate synthetase (309 aa).

Thr2 is subject to N-acetylthreonine. 40-47 (MGALHEGH) provides a ligand contact to ATP. The Proton donor role is filled by His47. Gln72 contacts (R)-pantoate. Gln72 is a binding site for beta-alanine. Residues Asp88, Asp89, and Gln92 each coordinate Mg(2+). Residue 158-161 (GEKD) participates in ATP binding. Gln164 provides a ligand contact to (R)-pantoate. ATP-binding positions include Val187 and 195–198 (MSSR).

Belongs to the pantothenate synthetase family.

It localises to the cytoplasm. It carries out the reaction (R)-pantoate + beta-alanine + ATP = (R)-pantothenate + AMP + diphosphate + H(+). The protein operates within cofactor biosynthesis; (R)-pantothenate biosynthesis; (R)-pantothenate from (R)-pantoate and beta-alanine: step 1/1. Pantothenate exhibits uncompetitive inhibition toward both D-pantoate and ATP, and non-competitive inhibition toward beta-alanine. AMPCPP exhibits competitive inhibition toward ATP, uncompetitive inhibition toward beta-alanine, and non-competitive inhibition toward D-pantoate. The enzyme is most active in the presence of magnesium or manganese. Other divalent cations (cobalt, nickel, zinc) are less effective. Catalyzes the condensation of pantoate with beta-alanine in an ATP-dependent reaction via a pantoyl-adenylate intermediate. The chain is Pantothenate synthetase (panC) from Mycobacterium tuberculosis (strain ATCC 25618 / H37Rv).